Here is an 823-residue protein sequence, read N- to C-terminus: Sphingomyelin phosphodiesterase 4 (823 aa).

Phosphoserine occurs at positions 130 and 245. Thr665 is modified (phosphothreonine). Ser749 carries the phosphoserine modification. A helical membrane pass occupies residues 776–796 (LLLLLMAFFVASLFCIGPLSC).

Requires Mg(2+) as cofactor. In terms of tissue distribution, expressed in skeletal muscle (at protein level). As to expression, expressed in skeletal muscle but a lower levels than isoform 1 (at protein level).

It is found in the endoplasmic reticulum membrane. The protein resides in the golgi apparatus membrane. It localises to the nucleus envelope. Its subcellular location is the cell membrane. The protein localises to the sarcolemma. The catalysed reaction is a sphingomyelin + H2O = phosphocholine + an N-acylsphing-4-enine + H(+). Its activity is regulated as follows. Activated by phosphatidylserine and tumor necrosis factor (TNF). Inhibited by scyphostatin. Catalyzes the hydrolysis of membrane sphingomyelin to form phosphorylcholine and ceramide. It has a relevant role in the homeostasis of membrane sphingolipids, thereby influencing membrane integrity, and endoplasmic reticulum organization and function. May sensitize cells to DNA damage-induced apoptosis. In skeletal muscle, mediates TNF-stimulated oxidant production. This Mus musculus (Mouse) protein is Sphingomyelin phosphodiesterase 4 (Smpd4).